The chain runs to 258 residues: uncharacterized protein (258 aa).

A run of 5 helical transmembrane segments spans residues 14–34 (LAFPWLSAVILNSFLLALAAI), 53–73 (VIIWAALGWRGYLVVLAYFFV), 110–130 (AALCALAIAFGPEPWQLWLAL), 185–205 (GLALAVLGYGVGLISFGGIIF), and 238–258 (GINTFLGAAIAIGIEATAQLI).

Belongs to the TMEM19 family.

It localises to the cell membrane. This is an uncharacterized protein from Synechocystis sp. (strain ATCC 27184 / PCC 6803 / Kazusa).